A 257-amino-acid polypeptide reads, in one-letter code: Kallikrein-1 (257 aa).

Residues 1–18 (MWFLVLCLALSLGGTGRA) form the signal peptide. The propeptide at 19–24 (PPIQSR) is activation peptide. The region spanning 25-254 (IVGGWECSQP…YVKWIEDTIA (230 aa)) is the Peptidase S1 domain. Intrachain disulfides connect Cys31/Cys169, Cys47/Cys63, Cys148/Cys215, Cys180/Cys194, and Cys205/Cys230. The active-site Charge relay system is the His62. An O-linked (GalNAc...) serine glycan is attached at Ser90. The N-linked (GlcNAc...) asparagine glycan is linked to Asn99. The O-linked (GalNAc...) serine glycan is linked to Ser101. N-linked (GlcNAc...) asparagine glycosylation occurs at Asn105. Catalysis depends on Asp116, which acts as the Charge relay system. Asn160 carries an N-linked (GlcNAc...) asparagine glycan. Residue Ser162 is glycosylated (O-linked (GalNAc...) serine). The Charge relay system role is filled by Ser209.

The protein belongs to the peptidase S1 family. Kallikrein subfamily.

It catalyses the reaction Preferential cleavage of Arg-|-Xaa bonds in small molecule substrates. Highly selective action to release kallidin (lysyl-bradykinin) from kininogen involves hydrolysis of Met-|-Xaa or Leu-|-Xaa.. In terms of biological role, glandular kallikreins cleave Met-Lys and Arg-Ser bonds in kininogen to release Lys-bradykinin. The protein is Kallikrein-1 (KLK1) of Macaca fascicularis (Crab-eating macaque).